Reading from the N-terminus, the 115-residue chain is Large ribosomal subunit protein bL20 (115 aa).

Belongs to the bacterial ribosomal protein bL20 family.

In terms of biological role, binds directly to 23S ribosomal RNA and is necessary for the in vitro assembly process of the 50S ribosomal subunit. It is not involved in the protein synthesizing functions of that subunit. The protein is Large ribosomal subunit protein bL20 of Chlorobium phaeobacteroides (strain BS1).